Here is a 160-residue protein sequence, read N- to C-terminus: 2-C-methyl-D-erythritol 2,4-cyclodiphosphate synthase (160 aa).

The a divalent metal cation site is built by Asp11 and His13. 4-CDP-2-C-methyl-D-erythritol 2-phosphate is bound by residues 11–13 (DIH) and 37–38 (HS). His45 is a binding site for a divalent metal cation. 4-CDP-2-C-methyl-D-erythritol 2-phosphate is bound by residues 59 to 61 (DIG), 135 to 138 (TTNE), and Arg145.

Belongs to the IspF family. As to quaternary structure, homotrimer. Requires a divalent metal cation as cofactor.

The enzyme catalyses 4-CDP-2-C-methyl-D-erythritol 2-phosphate = 2-C-methyl-D-erythritol 2,4-cyclic diphosphate + CMP. Its pathway is isoprenoid biosynthesis; isopentenyl diphosphate biosynthesis via DXP pathway; isopentenyl diphosphate from 1-deoxy-D-xylulose 5-phosphate: step 4/6. In terms of biological role, involved in the biosynthesis of isopentenyl diphosphate (IPP) and dimethylallyl diphosphate (DMAPP), two major building blocks of isoprenoid compounds. Catalyzes the conversion of 4-diphosphocytidyl-2-C-methyl-D-erythritol 2-phosphate (CDP-ME2P) to 2-C-methyl-D-erythritol 2,4-cyclodiphosphate (ME-CPP) with a corresponding release of cytidine 5-monophosphate (CMP). This Nostoc punctiforme (strain ATCC 29133 / PCC 73102) protein is 2-C-methyl-D-erythritol 2,4-cyclodiphosphate synthase.